A 526-amino-acid chain; its full sequence is Glucomannan 4-beta-mannosyltransferase 1 (526 aa).

Residues 31 to 51 (VIIPLLKLAVIVCSVMSIMLF) traverse the membrane as a helical segment. The active site involves D130. 2 residues coordinate substrate: D189 and D191. D283 is an active-site residue. A run of 4 helical transmembrane segments spans residues 362 to 382 (IVAH…CVIV), 399 to 419 (ITIL…LWIL), 477 to 497 (PLEI…LLFG), and 501 to 521 (FFVY…GLVG).

This sequence belongs to the glycosyltransferase 2 family. Plant cellulose synthase-like A subfamily.

It localises to the golgi apparatus membrane. It carries out the reaction GDP-mannose + (glucomannan)n = GDP + (glucomannan)n+1.. In terms of biological role, possesses 4-beta-mannosyltransferase activity on mannan using GDP-mannose. The beta-1,4-mannan product is the backbone for galactomannan synthesis by galactomannan galactosyltransferase. The galactomannan is a hemicellulosic storage polysaccharide accumulated in the form of secondary wall thickenings in the seed endosperm. The chain is Glucomannan 4-beta-mannosyltransferase 1 from Cyamopsis tetragonoloba (Guar).